We begin with the raw amino-acid sequence, 354 residues long: MTKNQDRMKSHTMELPRQIVVGEKNINEFGEFLHNLTKPKKVSLISGIHVKKVLRQRIEKSLKTKRIKFVWHTSKDNQISTLNRIEKEVKKDRSDMIAGIGGGRSVDTAKLISFNLDIPFVSVPTAASHDGVSSPFVSVKSDKPHSIVATAPLGVFVDIDIIKKAPSRLLASGCGDLVANIIAVKDWQLGHQKTGEYYGTYSAELAMMSAMMVLDNSSKYAKNGLDARVIVEALISAGVASCIAGSSRPCSGAEHLFSHALDKIAPGKGLHGEKCGIGSIMIAKLQGQDWKKIVKTLKDVGAPTTAKQIGLTEDQIIDALIIAQDLRPERYTILKEVEMTDRKAKSLAKSTKVI.

NAD(+) contacts are provided by residues 103–107 (GRSVD) and 125–128 (TAAS). Aspartate 130 is a substrate binding site. Serine 134 provides a ligand contact to NAD(+). Substrate is bound at residue aspartate 176. Residues aspartate 176 and histidine 255 each coordinate Zn(2+). Histidine 259 is a binding site for substrate. Histidine 271 contributes to the Zn(2+) binding site.

The protein belongs to the glycerol-1-phosphate dehydrogenase family. In terms of assembly, homodimer. Zn(2+) serves as cofactor.

It is found in the cytoplasm. The catalysed reaction is sn-glycerol 1-phosphate + NAD(+) = dihydroxyacetone phosphate + NADH + H(+). It catalyses the reaction sn-glycerol 1-phosphate + NADP(+) = dihydroxyacetone phosphate + NADPH + H(+). It functions in the pathway membrane lipid metabolism; glycerophospholipid metabolism. In terms of biological role, catalyzes the NAD(P)H-dependent reduction of dihydroxyacetonephosphate (DHAP or glycerone phosphate) to glycerol 1-phosphate (G1P). The G1P thus generated is used as the glycerophosphate backbone of phospholipids in the cellular membranes of Archaea. In Nitrosopumilus maritimus (strain SCM1), this protein is Glycerol-1-phosphate dehydrogenase [NAD(P)+].